The chain runs to 455 residues: D-arabinitol 4-dehydrogenase (455 aa).

This sequence belongs to the mannitol dehydrogenase family. Monomer.

The enzyme catalyses D-arabinitol + NAD(+) = D-xylulose + NADH + H(+). The protein operates within carbohydrate metabolism; D-arabinitol metabolism. In Klebsiella pneumoniae, this protein is D-arabinitol 4-dehydrogenase (dalD).